Reading from the N-terminus, the 147-residue chain is Lipoprotein signal peptidase (147 aa).

A run of 4 helical transmembrane segments spans residues 10 to 30 (ISIF…IKFL), 34 to 54 (GIVK…GTAF), 59 to 79 (FLGS…LVYM), and 87 to 107 (WFIY…RLIY). Catalysis depends on residues Asp112 and Asp130. The helical transmembrane segment at 121-141 (LHWPAFNVADSAISIGIVLFV) threads the bilayer.

Belongs to the peptidase A8 family.

It localises to the cell inner membrane. It carries out the reaction Release of signal peptides from bacterial membrane prolipoproteins. Hydrolyzes -Xaa-Yaa-Zaa-|-(S,diacylglyceryl)Cys-, in which Xaa is hydrophobic (preferably Leu), and Yaa (Ala or Ser) and Zaa (Gly or Ala) have small, neutral side chains.. It participates in protein modification; lipoprotein biosynthesis (signal peptide cleavage). In terms of biological role, this protein specifically catalyzes the removal of signal peptides from prolipoproteins. The chain is Lipoprotein signal peptidase from Thermodesulfovibrio yellowstonii (strain ATCC 51303 / DSM 11347 / YP87).